The following is a 297-amino-acid chain: Ketohexokinase (297 aa).

Residues D15, G41, N42, and N45 each coordinate beta-D-fructose. Residues R107, A225–G228, and G254–D257 each bind ATP. D257 provides a ligand contact to beta-D-fructose.

This sequence belongs to the carbohydrate kinase PfkB family. Homodimer.

The catalysed reaction is beta-D-fructose + ATP = beta-D-fructose 1-phosphate + ADP + H(+). The protein operates within carbohydrate metabolism; fructose metabolism. Its activity is regulated as follows. Requires potassium. Inhibition by ADP. Catalyzes the phosphorylation of the ketose sugar fructose to fructose-1-phosphate. In Pongo abelii (Sumatran orangutan), this protein is Ketohexokinase (KHK).